Here is a 429-residue protein sequence, read N- to C-terminus: Dual-specificity RNA methyltransferase RlmN (429 aa).

Residues 1 to 23 form a disordered region; sequence MRAMQTHTEIAPMPIPGHVDPVP. Glu-128 (proton acceptor) is an active-site residue. In terms of domain architecture, Radical SAM core spans 134–397; it reads DADRGTLCVS…APVRTPRGRD (264 aa). Cys-141 and Cys-402 form a disulfide bridge. Residues Cys-148, Cys-152, and Cys-155 each contribute to the [4Fe-4S] cluster site. Residues 226–227, Ser-258, 280–282, and Asn-359 each bind S-adenosyl-L-methionine; these read GE and SLH. The S-methylcysteine intermediate role is filled by Cys-402.

This sequence belongs to the radical SAM superfamily. RlmN family. [4Fe-4S] cluster is required as a cofactor.

Its subcellular location is the cytoplasm. It catalyses the reaction adenosine(2503) in 23S rRNA + 2 reduced [2Fe-2S]-[ferredoxin] + 2 S-adenosyl-L-methionine = 2-methyladenosine(2503) in 23S rRNA + 5'-deoxyadenosine + L-methionine + 2 oxidized [2Fe-2S]-[ferredoxin] + S-adenosyl-L-homocysteine. It carries out the reaction adenosine(37) in tRNA + 2 reduced [2Fe-2S]-[ferredoxin] + 2 S-adenosyl-L-methionine = 2-methyladenosine(37) in tRNA + 5'-deoxyadenosine + L-methionine + 2 oxidized [2Fe-2S]-[ferredoxin] + S-adenosyl-L-homocysteine. Specifically methylates position 2 of adenine 2503 in 23S rRNA and position 2 of adenine 37 in tRNAs. m2A2503 modification seems to play a crucial role in the proofreading step occurring at the peptidyl transferase center and thus would serve to optimize ribosomal fidelity. In Novosphingobium aromaticivorans (strain ATCC 700278 / DSM 12444 / CCUG 56034 / CIP 105152 / NBRC 16084 / F199), this protein is Dual-specificity RNA methyltransferase RlmN.